The primary structure comprises 228 residues: Prolactin-2A1 (228 aa).

A signal peptide spans 1–28 (MQLSVTHPCCRTLILLLVSNLLLWESEA). 2 disulfide bridges follow: Cys-87–Cys-203 and Cys-220–Cys-228.

It belongs to the somatotropin/prolactin family. Expressed specifically in the placenta. Expression restricted to the junctional zone of the chorioallantoic placenta.

It localises to the secreted. The chain is Prolactin-2A1 (Prl2a1) from Mus musculus (Mouse).